A 367-amino-acid polypeptide reads, in one-letter code: UDP-N-acetylglucosamine--N-acetylmuramyl-(pentapeptide) pyrophosphoryl-undecaprenol N-acetylglucosamine transferase (367 aa).

UDP-N-acetyl-alpha-D-glucosamine-binding positions include 15 to 17 (TGG), Asn127, Arg163, Ser191, Ile249, and Gln294.

It belongs to the glycosyltransferase 28 family. MurG subfamily.

It is found in the cell inner membrane. It catalyses the reaction di-trans,octa-cis-undecaprenyl diphospho-N-acetyl-alpha-D-muramoyl-L-alanyl-D-glutamyl-meso-2,6-diaminopimeloyl-D-alanyl-D-alanine + UDP-N-acetyl-alpha-D-glucosamine = di-trans,octa-cis-undecaprenyl diphospho-[N-acetyl-alpha-D-glucosaminyl-(1-&gt;4)]-N-acetyl-alpha-D-muramoyl-L-alanyl-D-glutamyl-meso-2,6-diaminopimeloyl-D-alanyl-D-alanine + UDP + H(+). Its pathway is cell wall biogenesis; peptidoglycan biosynthesis. Functionally, cell wall formation. Catalyzes the transfer of a GlcNAc subunit on undecaprenyl-pyrophosphoryl-MurNAc-pentapeptide (lipid intermediate I) to form undecaprenyl-pyrophosphoryl-MurNAc-(pentapeptide)GlcNAc (lipid intermediate II). The sequence is that of UDP-N-acetylglucosamine--N-acetylmuramyl-(pentapeptide) pyrophosphoryl-undecaprenol N-acetylglucosamine transferase from Burkholderia multivorans (strain ATCC 17616 / 249).